Consider the following 88-residue polypeptide: Large ribosomal subunit protein eL37A (88 aa).

Residues Cys-19, Cys-22, Cys-34, and Cys-37 each coordinate Zn(2+). The segment at 19–37 (CNRCGRRSFHVQKKTCSSC) adopts a C4-type zinc-finger fold.

Belongs to the eukaryotic ribosomal protein eL37 family. As to quaternary structure, component of the large ribosomal subunit (LSU). Mature yeast ribosomes consist of a small (40S) and a large (60S) subunit. The 40S small subunit contains 1 molecule of ribosomal RNA (18S rRNA) and 33 different proteins (encoded by 57 genes). The large 60S subunit contains 3 rRNA molecules (25S, 5.8S and 5S rRNA) and 46 different proteins (encoded by 81 genes). It depends on Zn(2+) as a cofactor.

It is found in the cytoplasm. Functionally, component of the ribosome, a large ribonucleoprotein complex responsible for the synthesis of proteins in the cell. The small ribosomal subunit (SSU) binds messenger RNAs (mRNAs) and translates the encoded message by selecting cognate aminoacyl-transfer RNA (tRNA) molecules. The large subunit (LSU) contains the ribosomal catalytic site termed the peptidyl transferase center (PTC), which catalyzes the formation of peptide bonds, thereby polymerizing the amino acids delivered by tRNAs into a polypeptide chain. The nascent polypeptides leave the ribosome through a tunnel in the LSU and interact with protein factors that function in enzymatic processing, targeting, and the membrane insertion of nascent chains at the exit of the ribosomal tunnel. In Saccharomyces cerevisiae (strain ATCC 204508 / S288c) (Baker's yeast), this protein is Large ribosomal subunit protein eL37A.